We begin with the raw amino-acid sequence, 326 residues long: Vitamin B12 import system permease protein BtuC (326 aa).

The Cytoplasmic portion of the chain corresponds to 1-10 (MLTLARQQQR). Residues 11–35 (QNIRWLLCLSVLMLLALLLSLCAGE) form a helical membrane-spanning segment. Topologically, residues 36-56 (QWISPGDWFSPRGELFVWQIR) are periplasmic. A helical membrane pass occupies residues 57-81 (LPRTLAVLLVGAALAISGAVMQALF). Residues 82–92 (ENPLAEPGLLG) lie on the Cytoplasmic side of the membrane. A helical transmembrane segment spans residues 93-107 (VSNGAGVGLIAAVLL). The Periplasmic segment spans residues 108-113 (GQGQLP). The chain crosses the membrane as a helical span at residues 114–138 (NWALGLCAIAGALIITLILLRFARR). Over 139–141 (HLS) the chain is Cytoplasmic. The chain crosses the membrane as a helical span at residues 142-166 (TSRLLLAGVALGIICSALMTWAIYF). The Periplasmic segment spans residues 167-190 (STSVDLRQLMYWMMGGFGGVDWRQ). Residues 191-206 (SWLMLALIPMLLWICC) traverse the membrane as a helical segment. At 207–228 (QSRPMNMLALGEISARQLGLPL) the chain is on the cytoplasmic side. A helical membrane pass occupies residues 229 to 249 (WFWRNVLVAATGWMVGVSVAL). Residues 250–257 (AGAIGFIG) are Periplasmic-facing. A helical membrane pass occupies residues 258–267 (LVIPHILRLC). The Cytoplasmic portion of the chain corresponds to 268–274 (GLTDHRA). A helical transmembrane segment spans residues 275-296 (LLPGCALAGASALLLADIVARL). The Periplasmic segment spans residues 297–304 (ALAAAELP). Residues 305–324 (IGVVTATLGAPVFIWLLLKA) traverse the membrane as a helical segment. At 325-326 (GR) the chain is on the cytoplasmic side.

This sequence belongs to the binding-protein-dependent transport system permease family. FecCD subfamily. In terms of assembly, the complex is composed of two ATP-binding proteins (BtuD), two transmembrane proteins (BtuC) and a solute-binding protein (BtuF).

Its subcellular location is the cell inner membrane. In terms of biological role, part of the ABC transporter complex BtuCDF involved in vitamin B12 import. Involved in the translocation of the substrate across the membrane. This Escherichia coli O157:H7 protein is Vitamin B12 import system permease protein BtuC (btuC).